The chain runs to 21 residues: Pseudogermin (21 aa).

It belongs to the germin family. As to quaternary structure, homotetramer.

It is found in the secreted. Its subcellular location is the extracellular space. The protein localises to the apoplast. The protein resides in the cell wall. Its function is as follows. May subsume the role of germin at the low water potentials during embryogenesis. This chain is Pseudogermin, found in Triticum aestivum (Wheat).